A 532-amino-acid polypeptide reads, in one-letter code: Spore germination protein 270-11 (532 aa).

Disordered regions lie at residues 113–225 (TTTS…GYGS) and 328–436 (LSPT…TTGT). Over residues 329-426 (SPTCSDSSSP…GSGSSSETQP (98 aa)) the composition is skewed to low complexity. Tandem repeats lie at residues 339–342 (TPTP), 343–346 (TETP), 347–350 (TETP), 351–354 (TETP), 355–358 (TETP), 359–362 (TETP), 363–366 (TETP), 367–370 (TETP), 371–374 (TETE), 375–378 (TPTP), 397–400 (TPTP), 401–404 (TETD), and 405–408 (TPTP). The interval 339–378 (TPTPTETPTETPTETPTETPTETPTETPTETPTETETPTP) is 10 X 4 AA tandem repeats of T-[EP]-T-[EP]. The segment at 397 to 408 (TPTPTETDTPTP) is 3 X 4 AA tandem repeats of T-[EP]-T-[PD].

The protein is Spore germination protein 270-11 (celB) of Dictyostelium discoideum (Social amoeba).